Consider the following 264-residue polypeptide: MSNVRSDKPFTLAGRTFQSRLLVGTGKYRDMEETRLAIEASGAEIVTVAVRRTNLGQNPGEPNLLDVLPPDRYTILPNTAGCYDAVEAVRTCRLARELLDGHNLVKLEVLADQKTLFPNVIETLKAAEVLVKDGFDVMVYTSDDPIIARQLAEAGCIAVMPLAGLIGTGLGICNPYNLQIILEESKVPVLVDAGVGTASDATIAMEMGCEAVLMNSAIAHAQQPVLMAEAMKHAIVAGRMAYLAGRMPKKLYASASSPLDGLIK.

The Schiff-base intermediate with DXP role is filled by Lys-106. 1-deoxy-D-xylulose 5-phosphate-binding positions include Gly-167, 193–194 (AG), and 215–216 (NS).

Belongs to the ThiG family. Homotetramer. Forms heterodimers with either ThiH or ThiS.

Its subcellular location is the cytoplasm. It catalyses the reaction [ThiS sulfur-carrier protein]-C-terminal-Gly-aminoethanethioate + 2-iminoacetate + 1-deoxy-D-xylulose 5-phosphate = [ThiS sulfur-carrier protein]-C-terminal Gly-Gly + 2-[(2R,5Z)-2-carboxy-4-methylthiazol-5(2H)-ylidene]ethyl phosphate + 2 H2O + H(+). It participates in cofactor biosynthesis; thiamine diphosphate biosynthesis. Its function is as follows. Catalyzes the rearrangement of 1-deoxy-D-xylulose 5-phosphate (DXP) to produce the thiazole phosphate moiety of thiamine. Sulfur is provided by the thiocarboxylate moiety of the carrier protein ThiS. In vitro, sulfur can be provided by H(2)S. This is Thiazole synthase from Pseudomonas putida (strain W619).